The sequence spans 130 residues: Small ribosomal subunit protein uS8 (130 aa).

The protein belongs to the universal ribosomal protein uS8 family. Part of the 30S ribosomal subunit. Contacts proteins S5 and S12.

Functionally, one of the primary rRNA binding proteins, it binds directly to 16S rRNA central domain where it helps coordinate assembly of the platform of the 30S subunit. This is Small ribosomal subunit protein uS8 from Ruegeria pomeroyi (strain ATCC 700808 / DSM 15171 / DSS-3) (Silicibacter pomeroyi).